The sequence spans 815 residues: ABC transporter G family member 7 (815 aa).

Disordered stretches follow at residues 81–141 and 177–249; these read NNID…TPNF and KQIK…TNGK. A coiled-coil region spans residues 164–199; sequence ENISYKTENRNYKKQIKDEKKRKKKLEMERSNSSNS. Residues 194 to 210 are compositionally biased toward low complexity; the sequence is SNSSNSNSSYDVESSAS. Over residues 211 to 248 the composition is skewed to polar residues; sequence GLQTPQQSRSSILPTNSLNISKIDQSMNPQQTRSTTNG. Residues 242 to 485 enclose the ABC transporter domain; that stretch reads TRSTTNGKIE…SLPNQYQCPN (244 aa). 274 to 281 contacts ATP; that stretch reads GPSGSGKS. An ABC transmembrane type-2 domain is found at 562–810; the sequence is TQYITRLSGG…VSGYWAISKL (249 aa). Transmembrane regions (helical) follow at residues 568 to 588, 598 to 618, 647 to 667, 675 to 695, 706 to 726, 732 to 752, and 788 to 808; these read LSGG…LSPS, ILFF…TLFL, AFIQ…INHL, FITY…IIAI, FIYG…LVPV, SFGW…VMVA, and GIGI…WAIS.

The protein belongs to the ABC transporter superfamily. ABCG family.

The protein localises to the membrane. The polypeptide is ABC transporter G family member 7 (abcG7) (Dictyostelium discoideum (Social amoeba)).